A 282-amino-acid polypeptide reads, in one-letter code: Nucleotide-binding protein XAC2976 (282 aa).

Residue 5 to 12 coordinates ATP; sequence GLSGSGKS. A GTP-binding site is contributed by 57-60; the sequence is DVRS.

It belongs to the RapZ-like family.

Displays ATPase and GTPase activities. The chain is Nucleotide-binding protein XAC2976 from Xanthomonas axonopodis pv. citri (strain 306).